A 110-amino-acid polypeptide reads, in one-letter code: Phosphoribosyl-ATP pyrophosphatase (110 aa).

This sequence belongs to the PRA-PH family.

Its subcellular location is the cytoplasm. It carries out the reaction 1-(5-phospho-beta-D-ribosyl)-ATP + H2O = 1-(5-phospho-beta-D-ribosyl)-5'-AMP + diphosphate + H(+). Its pathway is amino-acid biosynthesis; L-histidine biosynthesis; L-histidine from 5-phospho-alpha-D-ribose 1-diphosphate: step 2/9. The chain is Phosphoribosyl-ATP pyrophosphatase (hisE) from Clostridium acetobutylicum (strain ATCC 824 / DSM 792 / JCM 1419 / IAM 19013 / LMG 5710 / NBRC 13948 / NRRL B-527 / VKM B-1787 / 2291 / W).